The following is a 494-amino-acid chain: Glutamate--tRNA ligase (494 aa).

Residues 9 to 19 (PSPTGDPHVGT) carry the 'HIGH' region motif. Residues 250–254 (KLSKR) carry the 'KMSKS' region motif. Lys-253 contacts ATP.

Belongs to the class-I aminoacyl-tRNA synthetase family. Glutamate--tRNA ligase type 1 subfamily. Monomer.

It is found in the cytoplasm. It catalyses the reaction tRNA(Glu) + L-glutamate + ATP = L-glutamyl-tRNA(Glu) + AMP + diphosphate. Its function is as follows. Catalyzes the attachment of glutamate to tRNA(Glu) in a two-step reaction: glutamate is first activated by ATP to form Glu-AMP and then transferred to the acceptor end of tRNA(Glu). In Alcanivorax borkumensis (strain ATCC 700651 / DSM 11573 / NCIMB 13689 / SK2), this protein is Glutamate--tRNA ligase.